The primary structure comprises 56 residues: Alpha-pompilidotoxin (56 aa).

An N-terminal signal peptide occupies residues 1-22 (MFKQLILLALAAVFLLINISSA). A propeptide spanning residues 23-42 (EPAAEPNANAEPLAEASAEP) is cleaved from the precursor. Leucine 55 carries the leucine amide modification.

Expressed by the venom gland.

It is found in the secreted. In terms of biological role, inhibits sodium channels (Nav) inactivation. Shows two types of inhibitory activities on channels. Inhibition of hNav1.6/SCN8A shows a large increase in the steady-state current component without any increase in the slow component, whereas inhibition of hNav1.1/SCN1A, hNav1.2/SCN2A, hNav1.3/SCN3A and hNav1.7/SCN9A shows a large increase in the slow component with only a small steady-state component. Is 5-fold less potent than beta-PMTX for inducing repetitive action potentials in lobster neuromuscular junctions. The protein is Alpha-pompilidotoxin of Anoplius samariensis (Solitary wasp).